A 189-amino-acid chain; its full sequence is Ras-like protein 1 (189 aa).

10-17 (GAGGVGKS) contributes to the GTP binding site. The Effector region signature appears at 32-40 (YDPTIEDSY). Residues 57–61 (DTAGQ) and 116–119 (NKCD) each bind GTP. Cys-186 carries the post-translational modification Cysteine methyl ester. The S-geranylgeranyl cysteine moiety is linked to residue Cys-186. A propeptide spans 187-189 (KIL) (removed in mature form).

The protein belongs to the small GTPase superfamily. Ras family.

It is found in the cell membrane. It catalyses the reaction GTP + H2O = GDP + phosphate + H(+). With respect to regulation, alternates between an inactive form bound to GDP and an active form bound to GTP. Activated by a guanine nucleotide-exchange factor (GEF) and inactivated by a GTPase-activating protein (GAP). In terms of biological role, ras proteins bind GDP/GTP and possess intrinsic GTPase activity. Plays a role in eye development by regulating cell growth, survival of postmitotic ommatidial cells and differentiation of photoreceptor cells. During larval development, mediates Ptth/tor signaling leading to the production of ecdysone, a hormone required for the initiation of metamorphosis. The chain is Ras-like protein 1 from Drosophila persimilis (Fruit fly).